The following is a 370-amino-acid chain: Uroporphyrinogen decarboxylase (370 aa).

Residues arginine 29 to arginine 33, aspartate 79, tyrosine 155, serine 210, and histidine 342 each bind substrate.

The protein belongs to the uroporphyrinogen decarboxylase family. In terms of assembly, homodimer.

The protein resides in the cytoplasm. It carries out the reaction uroporphyrinogen III + 4 H(+) = coproporphyrinogen III + 4 CO2. Its pathway is porphyrin-containing compound metabolism; protoporphyrin-IX biosynthesis; coproporphyrinogen-III from 5-aminolevulinate: step 4/4. Its function is as follows. Catalyzes the decarboxylation of four acetate groups of uroporphyrinogen-III to yield coproporphyrinogen-III. This chain is Uroporphyrinogen decarboxylase, found in Variovorax paradoxus (strain S110).